A 149-amino-acid polypeptide reads, in one-letter code: 3-dehydroquinate dehydratase (149 aa).

Residue Tyr-26 is the Proton acceptor of the active site. Substrate-binding residues include Asn-77, His-83, and Asp-90. Residue His-103 is the Proton donor of the active site. Residues 104-105 (LS) and Arg-114 each bind substrate.

The protein belongs to the type-II 3-dehydroquinase family. As to quaternary structure, homododecamer.

It carries out the reaction 3-dehydroquinate = 3-dehydroshikimate + H2O. It functions in the pathway metabolic intermediate biosynthesis; chorismate biosynthesis; chorismate from D-erythrose 4-phosphate and phosphoenolpyruvate: step 3/7. In terms of biological role, catalyzes a trans-dehydration via an enolate intermediate. This chain is 3-dehydroquinate dehydratase, found in Haemophilus influenzae (strain PittGG).